Consider the following 119-residue polypeptide: Ig heavy chain V region X44 (119 aa).

The 117-residue stretch at 1 to 117 (EVKLLESGGG…WGQGTLVTVS (117 aa)) folds into the Ig-like domain.

The protein is Ig heavy chain V region X44 of Mus musculus (Mouse).